Here is a 627-residue protein sequence, read N- to C-terminus: Sodium- and chloride-dependent GABA transporter 3 (627 aa).

The segment at 1–36 is disordered; that stretch reads MTAEQALPLGNGKAAEEARGSEALGGGGGGAAGTRE. Over 1–53 the chain is Cytoplasmic; it reads MTAEQALPLGNGKAAEEARGSEALGGGGGGAAGTREARDKAVHERGHWNNKVE. Phosphoserine is present on S21. Gly residues predominate over residues 23-32; sequence ALGGGGGGAA. 3 consecutive transmembrane segments (helical) span residues 54-74, 82-101, and 126-146; these read FVLS…FPYL, AFLI…VFFL, and GIGY…IIIL. Residues 147–220 are Extracellular-facing; it reads AWAIFYLSNC…DGIEHIGNLR (74 aa). N-linked (GlcNAc...) asparagine glycosylation is found at N182, N185, and N193. A run of 9 helical transmembrane segments spans residues 221-239, 248-265, 301-318, 330-351, 384-403, 433-451, 468-488, 509-528, and 548-566; these read WELA…FCIW, VVYV…ILLI, IFFS…LGSY, IMLC…FSVL, MPLS…FLGL, LLIL…VMLT, GMCL…VYGS, WCWK…FFLV, and IGWL…WIFI. At 567–627 the chain is on the cytoplasmic side; that stretch reads KLWKTEGTLP…SAITEKETHF (61 aa).

It belongs to the sodium:neurotransmitter symporter (SNF) (TC 2.A.22) family. SLC6A11 subfamily. In terms of tissue distribution, brain and retina. Expressed predominantly within neurons. Expressed in the hippocampus (at protein level).

The protein localises to the cell membrane. The catalysed reaction is 4-aminobutanoate(out) + chloride(out) + 2 Na(+)(out) = 4-aminobutanoate(in) + chloride(in) + 2 Na(+)(in). It catalyses the reaction taurine(out) + chloride(out) + 2 Na(+)(out) = taurine(in) + chloride(in) + 2 Na(+)(in). The enzyme catalyses beta-alanine(out) + chloride(out) + 2 Na(+)(out) = beta-alanine(in) + chloride(in) + 2 Na(+)(in). It carries out the reaction hypotaurine(out) + chloride(out) + 2 Na(+)(out) = hypotaurine(in) + chloride(in) + 2 Na(+)(in). GABA transport is inhibited by beta-alanine. Mediates sodium- and chloride-dependent transport of gamma-aminobutyric acid (GABA). Can also mediate transport of beta-alanine and to a lower extent that of taurine and hypotaurine. This is Sodium- and chloride-dependent GABA transporter 3 (Slc6a11) from Rattus norvegicus (Rat).